The chain runs to 408 residues: L-lactate oxidase (408 aa).

One can recognise an FMN hydroxy acid dehydrogenase domain in the interval 14–370 (NEAIKMVNVD…KHADIRQINY (357 aa)). Tyrosine 40 serves as a coordination point for pyruvate. Residues 93-95 (PIA), serine 122, and glutamine 144 contribute to the FMN site. Tyrosine 146 provides a ligand contact to pyruvate. Threonine 172 contacts FMN. Arginine 181 contacts pyruvate. Residues lysine 241 and serine 263 each contribute to the FMN site. 2 residues coordinate pyruvate: histidine 265 and arginine 268. Catalysis depends on histidine 265, which acts as the Proton acceptor. Residues 296–300 (DSGVR) and arginine 320 each bind FMN.

Belongs to the FMN-dependent alpha-hydroxy acid dehydrogenase family. As to quaternary structure, homotetramer. It depends on FMN as a cofactor.

It carries out the reaction a (2S)-2-hydroxycarboxylate + O2 = a 2-oxocarboxylate + H2O2. It catalyses the reaction (S)-lactate + O2 = pyruvate + H2O2. The catalysed reaction is 2-hydroxyoctanoate + O2 = 2-oxooctanoate + H2O2. The enzyme catalyses glycolate + O2 = glyoxylate + H2O2. It carries out the reaction mandelate + O2 = phenylglyoxylate + H2O2. It catalyses the reaction 2-hydroxyoctadecanoate + O2 = 2-oxooctadecanoate + H2O2. Functionally, oxidase that catalyzes the oxidation of a broad range of 2-hydroxyacids in vitro, such as (S)-lactate, 2-hydroxyoctanoate, and to a lesser extent glycolate, mandelate and 2-hydroxyoctadecanoate, to the corresponding 2-oxoacids, with a reduction of O2 to H2O2. May be involved in the utilization of L-lactate as an energy source for growth. The protein is L-lactate oxidase of Lactobacillus jensenii.